The chain runs to 230 residues: Tol-Pal system protein TolQ (230 aa).

3 consecutive transmembrane segments (helical) span residues 16–36 (LVKLIMLILIGFSIASWAIII), 139–159 (YIGLFGTVWGIMHAFIALGAV), and 171–191 (IAEALIATAIGLFAAIPAVMA).

It belongs to the ExbB/TolQ family. In terms of assembly, the Tol-Pal system is composed of five core proteins: the inner membrane proteins TolA, TolQ and TolR, the periplasmic protein TolB and the outer membrane protein Pal. They form a network linking the inner and outer membranes and the peptidoglycan layer.

It localises to the cell inner membrane. Its function is as follows. Part of the Tol-Pal system, which plays a role in outer membrane invagination during cell division and is important for maintaining outer membrane integrity. Required, with TolR, for the proton motive force-dependent activation of TolA and for TolA-Pal interaction. In Escherichia coli O157:H7, this protein is Tol-Pal system protein TolQ.